A 161-amino-acid chain; its full sequence is N5-carboxyaminoimidazole ribonucleotide mutase (161 aa).

Substrate contacts are provided by Ser9, Asp12, and Arg39.

This sequence belongs to the AIR carboxylase family. Class I subfamily.

The enzyme catalyses 5-carboxyamino-1-(5-phospho-D-ribosyl)imidazole + H(+) = 5-amino-1-(5-phospho-D-ribosyl)imidazole-4-carboxylate. The protein operates within purine metabolism; IMP biosynthesis via de novo pathway; 5-amino-1-(5-phospho-D-ribosyl)imidazole-4-carboxylate from 5-amino-1-(5-phospho-D-ribosyl)imidazole (N5-CAIR route): step 2/2. In terms of biological role, catalyzes the conversion of N5-carboxyaminoimidazole ribonucleotide (N5-CAIR) to 4-carboxy-5-aminoimidazole ribonucleotide (CAIR). The polypeptide is N5-carboxyaminoimidazole ribonucleotide mutase (Aliivibrio fischeri (strain ATCC 700601 / ES114) (Vibrio fischeri)).